The sequence spans 340 residues: Terpene synthase 29 (340 aa).

Mg(2+) is bound by residues D132, E197, N257, S261, and E265. A DDXXXXD motif motif is present at residues D132–E138. An NSE/DTE motif motif is present at residues N257–E265.

Belongs to the trichodiene synthase family. Requires Mg(2+) as cofactor.

In terms of biological role, terpene cyclase that catalyzes the cyclization of farnesyl diphosphate (FPP) to a single major terpene scaffold whose chemical structure is still unknown. This chain is Terpene synthase 29, found in Postia placenta (strain ATCC 44394 / Madison 698-R) (Brown rot fungus).